Reading from the N-terminus, the 167-residue chain is Phosphopantetheine adenylyltransferase (167 aa).

Threonine 10 contributes to the substrate binding site. Residues 10-11 and histidine 18 each bind ATP; that span reads TF. 3 residues coordinate substrate: lysine 42, leucine 75, and arginine 89. Residues 90–92, glutamate 100, and 125–131 contribute to the ATP site; these read GVR and YTYVASS.

It belongs to the bacterial CoaD family. In terms of assembly, homohexamer. The cofactor is Mg(2+).

Its subcellular location is the cytoplasm. The catalysed reaction is (R)-4'-phosphopantetheine + ATP + H(+) = 3'-dephospho-CoA + diphosphate. Its pathway is cofactor biosynthesis; coenzyme A biosynthesis; CoA from (R)-pantothenate: step 4/5. Its function is as follows. Reversibly transfers an adenylyl group from ATP to 4'-phosphopantetheine, yielding dephospho-CoA (dPCoA) and pyrophosphate. The polypeptide is Phosphopantetheine adenylyltransferase (Chlorobium phaeobacteroides (strain DSM 266 / SMG 266 / 2430)).